Consider the following 215-residue polypeptide: MRIKICGITQPDQGQAIAQLGATALGFICVPQSPRYVTPDQIQGVITQLSISVDRIGVFANASLSQIEQVVQQTELTGVQLHGDESPQLCSEIKQRFNHLELIKAFRVKNLEALAQITAYFDRVDTLLLDAYHPQLLGGTGHTLNWDNLAHFNPPLPWFLAGGLTPDNIQEALTRLHPTGIDLSSGVERSPGDKDLTKVAQLLTQLQQFSSKKFP.

Belongs to the TrpF family.

It carries out the reaction N-(5-phospho-beta-D-ribosyl)anthranilate = 1-(2-carboxyphenylamino)-1-deoxy-D-ribulose 5-phosphate. It functions in the pathway amino-acid biosynthesis; L-tryptophan biosynthesis; L-tryptophan from chorismate: step 3/5. In Rippkaea orientalis (strain PCC 8801 / RF-1) (Cyanothece sp. (strain PCC 8801)), this protein is N-(5'-phosphoribosyl)anthranilate isomerase.